Reading from the N-terminus, the 1409-residue chain is Copia protein (1409 aa).

Residues 230–247 form a CCHC-type zinc finger; that stretch reads VKCHHCGREGHIKKDCFH. The active-site For protease activity is the D292. An Integrase catalytic domain is found at 476–644; it reads HIKRPLFVVH…TPYEMWHNKK (169 aa). Disordered regions lie at residues 760–780 and 805–851; these read SKESENKNFPNDSRKIIQTEF and NESK…NDGI. A compositionally biased stretch (basic and acidic residues) spans 827 to 841; that stretch reads ESRESETAEHLKEIG.

This Drosophila melanogaster (Fruit fly) protein is Copia protein (GIP).